A 204-amino-acid polypeptide reads, in one-letter code: DNA-directed RNA polymerase III subunit RPC8 (204 aa).

A disordered region spans residues 158 to 178; the sequence is VDTSPTGPSSAEAASSSEELP. Positions 166-175 are enriched in low complexity; it reads SSAEAASSSE.

This sequence belongs to the eukaryotic RPB7/RPC8 RNA polymerase subunit family. Component of the RNA polymerase III complex consisting of 17 subunits: a ten-subunit horseshoe-shaped catalytic core composed of POLR3A/RPC1, POLR3B/RPC2, POLR1C/RPAC1, POLR1D/RPAC2, POLR3K/RPC10, POLR2E/RPABC1, POLR2F/RPABC2, POLR2H/RPABC3, POLR2K/RPABC4 and POLR2L/RPABC5; a mobile stalk composed of two subunits POLR3H/RPC8 and CRCP/RPC9, protruding from the core and functioning primarily in transcription initiation; and additional subunits homologous to general transcription factors of the RNA polymerase II machinery, POLR3C/RPC3-POLR3F/RPC6-POLR3G/RPC7 heterotrimer required for transcription initiation and POLR3D/RPC4-POLR3E/RPC5 heterodimer involved in both transcription initiation and termination. Interacts with CRCP/RPC9. POLR3H/RPC8 and CRCP/RPC9 probably form a Pol III subcomplex.

The protein localises to the nucleus. Its function is as follows. DNA-dependent RNA polymerase catalyzes the transcription of DNA into RNA using the four ribonucleoside triphosphates as substrates. Specific peripheric component of RNA polymerase III (Pol III) which synthesizes small non-coding RNAs including 5S rRNA, snRNAs, tRNAs and miRNAs from at least 500 distinct genomic loci. With CRCP/RPC9 forms a mobile stalk that protrudes from Pol III core and functions primarily in transcription initiation. Pol III plays a key role in sensing and limiting infection by intracellular bacteria and DNA viruses. Acts as nuclear and cytosolic DNA sensor involved in innate immune response. Can sense non-self dsDNA that serves as template for transcription into dsRNA. The non-self RNA polymerase III transcripts, such as Epstein-Barr virus-encoded RNAs (EBERs) induce type I interferon and NF-kappa-B through the RIG-I pathway. The sequence is that of DNA-directed RNA polymerase III subunit RPC8 (POLR3H) from Bos taurus (Bovine).